Consider the following 86-residue polypeptide: Small ribosomal subunit protein bS20 (86 aa).

The segment covering 1 to 18 (MANIKSQEKRIRTNERAR) has biased composition (basic and acidic residues). The interval 1 to 25 (MANIKSQEKRIRTNERARLRNQATK) is disordered.

The protein belongs to the bacterial ribosomal protein bS20 family.

Its function is as follows. Binds directly to 16S ribosomal RNA. This Mycobacteroides abscessus (strain ATCC 19977 / DSM 44196 / CCUG 20993 / CIP 104536 / JCM 13569 / NCTC 13031 / TMC 1543 / L948) (Mycobacterium abscessus) protein is Small ribosomal subunit protein bS20.